Reading from the N-terminus, the 500-residue chain is NAD(P)H-quinone oxidoreductase chain 4, chloroplastic (500 aa).

15 helical membrane-spanning segments follow: residues 3 to 23, 37 to 57, 87 to 107, 113 to 130, 134 to 154, 167 to 187, 208 to 228, 242 to 262, 272 to 292, 305 to 325, 330 to 350, 364 to 384, 386 to 406, 411 to 431, and 462 to 482; these read FFPW…IILF, ICIC…HFQL, IGPI…AWPV, LFHF…GLFA, LLLF…LLSM, FILY…GVGL, ALEI…SPII, HYST…YGLI, AHSI…IYAA, IAYS…SIND, GAIL…FLAG, MGGI…FSMA, LALP…GIIT, LLIS…LTPI, and LFVS…PDFV.

Belongs to the complex I subunit 4 family.

It is found in the plastid. The protein resides in the chloroplast thylakoid membrane. It carries out the reaction a plastoquinone + NADH + (n+1) H(+)(in) = a plastoquinol + NAD(+) + n H(+)(out). The catalysed reaction is a plastoquinone + NADPH + (n+1) H(+)(in) = a plastoquinol + NADP(+) + n H(+)(out). In Daucus carota (Wild carrot), this protein is NAD(P)H-quinone oxidoreductase chain 4, chloroplastic.